Consider the following 351-residue polypeptide: D-alanine--D-alanine ligase (351 aa).

The region spanning 135-343 (NQIFLQSGQK…MEEVFSDLIE (209 aa)) is the ATP-grasp domain. 167–222 (LETLGFPQFLKPVEGGSSVSVYKITNREQLKEKLALIFESDSKVMSQSFLTGIEVS) serves as a coordination point for ATP. Mg(2+) contacts are provided by Asp-298, Glu-310, and Asn-312.

The protein belongs to the D-alanine--D-alanine ligase family. The cofactor is Mg(2+). It depends on Mn(2+) as a cofactor.

The protein resides in the cytoplasm. It carries out the reaction 2 D-alanine + ATP = D-alanyl-D-alanine + ADP + phosphate + H(+). It functions in the pathway cell wall biogenesis; peptidoglycan biosynthesis. In terms of biological role, cell wall formation. This is D-alanine--D-alanine ligase from Leptospira interrogans serogroup Icterohaemorrhagiae serovar copenhageni (strain Fiocruz L1-130).